Consider the following 324-residue polypeptide: R2-like ligand binding oxidase (324 aa).

The Mn(2+) site is built by glutamate 79, glutamate 112, and histidine 115. A cross-link (3-(O4'-tyrosyl)-valine (Val-Tyr)) is located at residues 82–173; that stretch reads VTEDIQPFMK…VNQVRASVTY (92 aa). Glutamate 112 is a binding site for Fe cation. Glutamate 178, glutamate 213, and histidine 216 together coordinate Fe cation. Positions 304 to 324 are disordered; it reads PEALEEKFGEEDAKAMSEAAG. Over residues 307–318 the composition is skewed to basic and acidic residues; that stretch reads LEEKFGEEDAKA.

It belongs to the ribonucleoside diphosphate reductase small chain family. R2-like ligand binding oxidase subfamily. As to quaternary structure, homodimer. The cofactor is Fe cation. Requires Mn(2+) as cofactor.

Functionally, probable oxidase. The chain is R2-like ligand binding oxidase from Rhodococcus jostii (strain RHA1).